The primary structure comprises 638 residues: DNA gyrase subunit B (638 aa).

The Toprim domain occupies 431–545 (RELFIVEGNS…YGFVYIAQPP (115 aa)). Residues glutamate 437, aspartate 510, and aspartate 512 each coordinate Mg(2+).

The protein belongs to the type II topoisomerase GyrB family. Heterotetramer, composed of two GyrA and two GyrB chains. In the heterotetramer, GyrA contains the active site tyrosine that forms a transient covalent intermediate with DNA, while GyrB binds cofactors and catalyzes ATP hydrolysis. It depends on Mg(2+) as a cofactor. The cofactor is Mn(2+). Ca(2+) serves as cofactor.

It localises to the cytoplasm. It carries out the reaction ATP-dependent breakage, passage and rejoining of double-stranded DNA.. In terms of biological role, a type II topoisomerase that negatively supercoils closed circular double-stranded (ds) DNA in an ATP-dependent manner to modulate DNA topology and maintain chromosomes in an underwound state. Negative supercoiling favors strand separation, and DNA replication, transcription, recombination and repair, all of which involve strand separation. Also able to catalyze the interconversion of other topological isomers of dsDNA rings, including catenanes and knotted rings. Type II topoisomerases break and join 2 DNA strands simultaneously in an ATP-dependent manner. The protein is DNA gyrase subunit B of Metamycoplasma arthritidis (Mycoplasma arthritidis).